Consider the following 392-residue polypeptide: 5-azacytidine-induced protein 2 (392 aa).

Positions 1 to 197 are homodimerization; sequence MDALVEDDIC…IELQKAKQTD (197 aa). 3 coiled-coil regions span residues 40 to 76, 102 to 135, and 166 to 196; these read ALVTAYEDIKKRLKDSEKENSLLKKRIRFLEEKLIAR, DRDNLKSKLDKMNKDNSESLKVLNEQLQSKEVEL, and DLKIHGLEQELELMRKECSDLKIELQKAKQT. The segment at 216–257 is interaction with TBK1 and IKBKE; it reads SDNMQHAYWELKREMSNLHLVTQVQAELLRKLKTSTAIKKAC. 2 positions are modified to phosphoserine: Ser-318 and Ser-353. Positions 345–365 are disordered; the sequence is EDNSWVFPSPPKSSETAFGET.

Homodimer. Interacts with IKBKE, TBK1 and TICAM1. Interacts with TAX1BP1. Interacts with CALCOCO2. Ubiquitinated via 'Lys-48'-linked polyubiquitination by TRIM38, leading to its degradation.

It localises to the cytoplasm. Its function is as follows. Adapter protein which binds TBK1 and IKBKE playing a role in antiviral innate immunity. Activates serine/threonine-protein kinase TBK1 and facilitates its oligomerization. Enhances the phosphorylation of NF-kappa-B p65 subunit RELA by TBK1. Promotes TBK1-induced as well as TNF-alpha or PMA-induced activation of NF-kappa-B. Participates in IFNB promoter activation via TICAM1. The polypeptide is 5-azacytidine-induced protein 2 (AZI2) (Pongo abelii (Sumatran orangutan)).